Consider the following 700-residue polypeptide: Elongation factor G (700 aa).

A tr-type G domain is found at 8-290; that stretch reads ERYRNIGISA…AVIDYLPAPT (283 aa). Residues 17-24, 88-92, and 142-145 each bind GTP; these read AHIDAGKT, DTPGH, and NKMD.

The protein belongs to the TRAFAC class translation factor GTPase superfamily. Classic translation factor GTPase family. EF-G/EF-2 subfamily.

Its subcellular location is the cytoplasm. In terms of biological role, catalyzes the GTP-dependent ribosomal translocation step during translation elongation. During this step, the ribosome changes from the pre-translocational (PRE) to the post-translocational (POST) state as the newly formed A-site-bound peptidyl-tRNA and P-site-bound deacylated tRNA move to the P and E sites, respectively. Catalyzes the coordinated movement of the two tRNA molecules, the mRNA and conformational changes in the ribosome. This Pasteurella multocida (strain Pm70) protein is Elongation factor G (fusA).